Reading from the N-terminus, the 146-residue chain is Hemoglobin subunit beta (146 aa).

V1 is subject to N-acetylvaline. The Globin domain occupies 2-146 (HLTAEEKSAV…VATALAHKYH (145 aa)). Phosphothreonine is present on T12. S44 is subject to Phosphoserine. K59 is subject to N6-acetyllysine. H63 contacts heme b. An N6-acetyllysine modification is found at K82. H92 provides a ligand contact to heme b. C93 bears the S-nitrosocysteine mark. At K144 the chain carries N6-acetyllysine.

The protein belongs to the globin family. As to quaternary structure, heterotetramer of two alpha chains and two beta chains. As to expression, red blood cells.

Its function is as follows. Involved in oxygen transport from the lung to the various peripheral tissues. This Cebus albifrons (White-fronted capuchin) protein is Hemoglobin subunit beta (HBB).